We begin with the raw amino-acid sequence, 354 residues long: Holliday junction branch migration complex subunit RuvB (354 aa).

The segment at 4-198 (TTDYGASNTG…FGFTAHLDFY (195 aa)) is large ATPase domain (RuvB-L). ATP is bound by residues L37, R38, G79, K82, T83, T84, 145–147 (EDF), R188, Y198, and R235. T83 serves as a coordination point for Mg(2+). Residues 199–269 (PHEELEKLIE…DVKEALALYQ (71 aa)) are small ATPAse domain (RuvB-S). Positions 272 to 354 (SEGLDRLDIA…TPKDDVSKLF (83 aa)) are head domain (RuvB-H). Residues R327 and R332 each contribute to the DNA site.

It belongs to the RuvB family. In terms of assembly, homohexamer. Forms an RuvA(8)-RuvB(12)-Holliday junction (HJ) complex. HJ DNA is sandwiched between 2 RuvA tetramers; dsDNA enters through RuvA and exits via RuvB. An RuvB hexamer assembles on each DNA strand where it exits the tetramer. Each RuvB hexamer is contacted by two RuvA subunits (via domain III) on 2 adjacent RuvB subunits; this complex drives branch migration. In the full resolvosome a probable DNA-RuvA(4)-RuvB(12)-RuvC(2) complex forms which resolves the HJ.

The protein localises to the cytoplasm. It carries out the reaction ATP + H2O = ADP + phosphate + H(+). In terms of biological role, the RuvA-RuvB-RuvC complex processes Holliday junction (HJ) DNA during genetic recombination and DNA repair, while the RuvA-RuvB complex plays an important role in the rescue of blocked DNA replication forks via replication fork reversal (RFR). RuvA specifically binds to HJ cruciform DNA, conferring on it an open structure. The RuvB hexamer acts as an ATP-dependent pump, pulling dsDNA into and through the RuvAB complex. RuvB forms 2 homohexamers on either side of HJ DNA bound by 1 or 2 RuvA tetramers; 4 subunits per hexamer contact DNA at a time. Coordinated motions by a converter formed by DNA-disengaged RuvB subunits stimulates ATP hydrolysis and nucleotide exchange. Immobilization of the converter enables RuvB to convert the ATP-contained energy into a lever motion, pulling 2 nucleotides of DNA out of the RuvA tetramer per ATP hydrolyzed, thus driving DNA branch migration. The RuvB motors rotate together with the DNA substrate, which together with the progressing nucleotide cycle form the mechanistic basis for DNA recombination by continuous HJ branch migration. Branch migration allows RuvC to scan DNA until it finds its consensus sequence, where it cleaves and resolves cruciform DNA. In Bifidobacterium longum (strain NCC 2705), this protein is Holliday junction branch migration complex subunit RuvB.